A 913-amino-acid chain; its full sequence is Anoctamin-5 (913 aa).

At 1 to 299 (MGDPDLLEVL…DLIKNYYGEK (299 aa)) the chain is on the cytoplasmic side. Residues 300-320 (IGIYFVFLGFYTEMLFFAAVV) traverse the membrane as a helical segment. At 321–380 (GLACFIYGLLSMEHNTSSTEICDPEIGGQMIMCPLCDQVCDYWRLNSTCLASKFSHLFDN) the chain is on the extracellular side. N-linked (GlcNAc...) asparagine glycans are attached at residues Asn-335, Asn-366, and Asn-380. The helical transmembrane segment at 381 to 401 (ESTVFFAIFMGIWVTLFLEFW) threads the bilayer. Residues 402–462 (KQRQARLEYE…YTRIPWYFLS (61 aa)) are Cytoplasmic-facing. The helical transmembrane segment at 463–483 (GATVTLWMSLVVTSMVAVIVY) threads the bilayer. Residues 484–511 (RLSVFATFASFMESDASLKQVKSFLTPQ) lie on the Extracellular side of the membrane. The helical transmembrane segment at 512-532 (ITTSLTGSCLNFIVILILNFF) threads the bilayer. At 533-557 (YEKISAWITKMEIPRTYQEYESSLT) the chain is on the cytoplasmic side. The helical transmembrane segment at 558 to 578 (LKMFLFQFVNFYSSCFYVAFF) threads the bilayer. Over 579–679 (KGKFVGYPGK…FYEYLETVTQ (101 aa)) the chain is Extracellular. Residues 680 to 700 (FGFVTLFVASFPLAPLLALIN) form a helical membrane-spanning segment. Residues 701–732 (NIVEIRVDAWKLTTQYRRTVASKAHSIGVWQD) lie on the Cytoplasmic side of the membrane. Residues 733–753 (ILYGMAVLSVATNAFIVAFTS) form a helical membrane-spanning segment. Residues 754-834 (DIIPRLVYYY…FWHVLAAKMT (81 aa)) are Extracellular-facing. N-linked (GlcNAc...) asparagine glycosylation is found at Asn-768, Asn-778, and Asn-791. The chain crosses the membrane as a helical span at residues 835–855 (FIIVMEHVVFLVKFLLAWMIP). Over 856–913 (DVPKDVVERIKREKLMTIKILHDFELNKLKENLGINSNEFAKHVMIEENKAQLAKSTL) the chain is Cytoplasmic.

The protein belongs to the anoctamin family. Highly expressed in brain, heart, kidney, lung, and skeletal muscle. Weakly expressed in bone marrow, fetal liver, placenta, spleen, thymus, osteoblasts and periodontal ligament cells.

It is found in the endoplasmic reticulum membrane. The protein resides in the cell membrane. Its function is as follows. Plays a role in plasma membrane repair in a process involving annexins. Does not exhibit calcium-activated chloride channel (CaCC) activity. In Homo sapiens (Human), this protein is Anoctamin-5 (ANO5).